A 126-amino-acid polypeptide reads, in one-letter code: Histone H2B 3 (126 aa).

Residues 1–12 (MPEPAKSAPAPK) are compositionally biased toward low complexity. The segment at 1-34 (MPEPAKSAPAPKKGSKKAVTKTQKKGDKKRRKTR) is disordered. Residues lysine 6 and lysine 13 each carry the N6-acetyllysine modification. Over residues 13 to 34 (KGSKKAVTKTQKKGDKKRRKTR) the composition is skewed to basic residues. Serine 15 is subject to Phosphoserine. Residues lysine 16 and lysine 21 each carry the N6-acetyllysine modification. O-linked (GlcNAc) serine glycosylation is present at serine 113. Lysine 121 participates in a covalent cross-link: Glycyl lysine isopeptide (Lys-Gly) (interchain with G-Cter in ubiquitin).

It belongs to the histone H2B family. In terms of assembly, the nucleosome is a histone octamer containing two molecules each of H2A, H2B, H3 and H4 assembled in one H3-H4 heterotetramer and two H2A-H2B heterodimers. The octamer wraps approximately 147 bp of DNA. Post-translationally, monoubiquitination of Lys-121 by the BRE1 gives a specific tag for epigenetic transcriptional activation and is also prerequisite for histone H3 'Lys-4' and 'Lys-79' methylation. In terms of processing, phosphorylated on Ser-15 during apoptosis; which facilitates apoptotic chromatin condensation. GlcNAcylation at Ser-113 promotes monoubiquitination of Lys-121. It fluctuates in response to extracellular glucose, and associates with transcribed genes.

The protein localises to the nucleus. It localises to the chromosome. Functionally, core component of nucleosome. Nucleosomes wrap and compact DNA into chromatin, limiting DNA accessibility to the cellular machineries which require DNA as a template. Histones thereby play a central role in transcription regulation, DNA repair, DNA replication and chromosomal stability. DNA accessibility is regulated via a complex set of post-translational modifications of histones, also called histone code, and nucleosome remodeling. The polypeptide is Histone H2B 3 (hist2h2l) (Danio rerio (Zebrafish)).